The sequence spans 296 residues: Cobalamin trafficking protein CblD (296 aa).

A mitochondrion-targeting transit peptide spans 1–38 (MAHVLCNRARLVSYLPGFCSLVKRVINPRAFSTAGSSG). K203 is modified (N6-acetyllysine).

Heterodimer with MMACHC. Forms a multiprotein complex with MMACHC, MTR and MTRR.

The protein localises to the cytoplasm. It localises to the mitochondrion. In terms of biological role, involved in cobalamin metabolism and trafficking. Plays a role in regulating the biosynthesis and the proportion of two coenzymes, methylcob(III)alamin (MeCbl) and 5'-deoxyadenosylcobalamin (AdoCbl). Promotes oxidation of cob(II)alamin bound to MMACHC. The processing of cobalamin in the cytosol occurs in a multiprotein complex composed of at least MMACHC, MMADHC, MTRR (methionine synthase reductase) and MTR (methionine synthase) which may contribute to shuttle safely and efficiently cobalamin towards MTR in order to produce methionine. The sequence is that of Cobalamin trafficking protein CblD from Mus musculus (Mouse).